A 195-amino-acid polypeptide reads, in one-letter code: MELSLVVFTVVCWVSVWSDDRIISDRHAVYWNSSNSRFWQGEYTVAVSINDYLDVYCPYYESPQPHSRMERYILFMVNHDGYLTCEHRMRGFKRWECNRPQSPDGPLRFSEKFQLFTPFSLGFEFRPGHEYYYISSPHPNHAGKPCLKLKVYVKPTSSGYESPEPFLTDQSQRCGADGPCLAVLMLLLVFLLAGV.

An N-terminal signal peptide occupies residues 1-16; it reads MELSLVVFTVVCWVSV. The Ephrin RBD domain maps to 24-157; sequence SDRHAVYWNS…KLKVYVKPTS (134 aa). Residue N32 is glycosylated (N-linked (GlcNAc...) asparagine). Disulfide bonds link C57–C97 and C85–C146. Residue C174 is the site of GPI-anchor amidated cysteine attachment. Residues 175–195 constitute a propeptide, removed in mature form; that stretch reads GADGPCLAVLMLLLVFLLAGV.

The protein belongs to the ephrin family. Binds to the receptor tyrosine kinases epha2, epha3, epha4 and epha5. Interacts with epha8; activates epha8. In terms of tissue distribution, widespread expression in the embryo.

Its subcellular location is the cell membrane. In terms of biological role, cell surface GPI-bound ligand for Eph receptors, a family of receptor tyrosine kinases which are crucial for migration, repulsion and adhesion during neuronal, vascular and epithelial development. Binds promiscuously Eph receptors residing on adjacent cells, leading to contact-dependent bidirectional signaling into neighboring cells. The signaling pathway downstream of the receptor is referred to as forward signaling while the signaling pathway downstream of the ephrin ligand is referred to as reverse signaling. With the epha2 receptor may play a role in bone remodeling through regulation of osteoclastogenesis and osteoblastogenesis. The chain is Ephrin-A2 (efna2) from Danio rerio (Zebrafish).